The following is a 327-amino-acid chain: F-box/LRR-repeat protein At3g58900 (327 aa).

One can recognise an F-box domain in the interval Met-1 to Asp-47. 5 LRR repeats span residues Asp-116–Ser-144, Lys-161–Asn-192, Asn-199–Ala-230, Tyr-235–Leu-261, and Glu-277–Pro-308.

This is F-box/LRR-repeat protein At3g58900 from Arabidopsis thaliana (Mouse-ear cress).